The sequence spans 554 residues: CTP synthase (554 aa).

The tract at residues 1 to 270 is amidoligase domain; the sequence is MTKFVFVTGG…DGLICDKLRL (270 aa). Serine 13 provides a ligand contact to CTP. Serine 13 contributes to the UTP binding site. ATP contacts are provided by residues 14–19 and aspartate 71; that span reads SLGKGI. 2 residues coordinate Mg(2+): aspartate 71 and glutamate 144. CTP is bound by residues 151–153, 191–196, and lysine 227; these read DIE and KTKPTQ. UTP contacts are provided by residues 191-196 and lysine 227; that span reads KTKPTQ. The Glutamine amidotransferase type-1 domain occupies 295–548; that stretch reads TVAMVGKYVD…IAAAKARHQA (254 aa). L-glutamine is bound at residue glycine 357. Cysteine 384 acts as the Nucleophile; for glutamine hydrolysis in catalysis. Residues 385–388, glutamate 408, and arginine 474 contribute to the L-glutamine site; that span reads LGMQ. Active-site residues include histidine 521 and glutamate 523.

Belongs to the CTP synthase family. As to quaternary structure, homotetramer.

It carries out the reaction UTP + L-glutamine + ATP + H2O = CTP + L-glutamate + ADP + phosphate + 2 H(+). The catalysed reaction is L-glutamine + H2O = L-glutamate + NH4(+). It catalyses the reaction UTP + NH4(+) + ATP = CTP + ADP + phosphate + 2 H(+). Its pathway is pyrimidine metabolism; CTP biosynthesis via de novo pathway; CTP from UDP: step 2/2. Allosterically activated by GTP, when glutamine is the substrate; GTP has no effect on the reaction when ammonia is the substrate. The allosteric effector GTP functions by stabilizing the protein conformation that binds the tetrahedral intermediate(s) formed during glutamine hydrolysis. Inhibited by the product CTP, via allosteric rather than competitive inhibition. Catalyzes the ATP-dependent amination of UTP to CTP with either L-glutamine or ammonia as the source of nitrogen. Regulates intracellular CTP levels through interactions with the four ribonucleotide triphosphates. The polypeptide is CTP synthase (Verminephrobacter eiseniae (strain EF01-2)).